The following is a 151-amino-acid chain: Transcriptional regulator MraZ (151 aa).

SpoVT-AbrB domains are found at residues 5–52 (ANAV…PLDE) and 81–124 (AVDL…DEDA).

The protein belongs to the MraZ family. Forms oligomers.

Its subcellular location is the cytoplasm. The protein localises to the nucleoid. The sequence is that of Transcriptional regulator MraZ from Pseudomonas putida (strain ATCC 700007 / DSM 6899 / JCM 31910 / BCRC 17059 / LMG 24140 / F1).